Consider the following 100-residue polypeptide: Large ribosomal subunit protein uL23 (100 aa).

The protein belongs to the universal ribosomal protein uL23 family. In terms of assembly, part of the 50S ribosomal subunit. Contacts protein L29, and trigger factor when it is bound to the ribosome.

In terms of biological role, one of the early assembly proteins it binds 23S rRNA. One of the proteins that surrounds the polypeptide exit tunnel on the outside of the ribosome. Forms the main docking site for trigger factor binding to the ribosome. This is Large ribosomal subunit protein uL23 from Aliivibrio fischeri (strain MJ11) (Vibrio fischeri).